A 476-amino-acid chain; its full sequence is Glycogen synthase (476 aa).

ADP-alpha-D-glucose is bound at residue Lys15.

The protein belongs to the glycosyltransferase 1 family. Bacterial/plant glycogen synthase subfamily.

It catalyses the reaction [(1-&gt;4)-alpha-D-glucosyl](n) + ADP-alpha-D-glucose = [(1-&gt;4)-alpha-D-glucosyl](n+1) + ADP + H(+). The protein operates within glycan biosynthesis; glycogen biosynthesis. Its function is as follows. Synthesizes alpha-1,4-glucan chains using ADP-glucose. The sequence is that of Glycogen synthase from Bacillus cereus (strain Q1).